The following is a 267-amino-acid chain: Proteasome subunit alpha (267 aa).

The segment at glutamate 231 to aspartate 267 is disordered. Residues leucine 234 to aspartate 267 show a composition bias toward basic and acidic residues.

This sequence belongs to the peptidase T1A family. As to quaternary structure, the 20S proteasome core is composed of 14 alpha and 14 beta subunits that assemble into four stacked heptameric rings, resulting in a barrel-shaped structure. The two inner rings, each composed of seven catalytic beta subunits, are sandwiched by two outer rings, each composed of seven alpha subunits. The catalytic chamber with the active sites is on the inside of the barrel. Has a gated structure, the ends of the cylinder being occluded by the N-termini of the alpha-subunits. Is capped by the proteasome-associated ATPase, ARC.

It localises to the cytoplasm. Its pathway is protein degradation; proteasomal Pup-dependent pathway. The formation of the proteasomal ATPase ARC-20S proteasome complex, likely via the docking of the C-termini of ARC into the intersubunit pockets in the alpha-rings, may trigger opening of the gate for substrate entry. Interconversion between the open-gate and close-gate conformations leads to a dynamic regulation of the 20S proteasome proteolysis activity. Functionally, component of the proteasome core, a large protease complex with broad specificity involved in protein degradation. This chain is Proteasome subunit alpha, found in Mycobacterium marinum (strain ATCC BAA-535 / M).